Consider the following 1556-residue polypeptide: Ras guanine nucleotide exchange factor G (1556 aa).

Disordered regions lie at residues isoleucine 19–glycine 63, leucine 93–threonine 141, serine 163–serine 239, and alanine 254–serine 296. Low complexity-rich tracts occupy residues asparagine 25–asparagine 54 and asparagine 96–threonine 141. Acidic residues predominate over residues aspartate 170–serine 186. A compositionally biased stretch (low complexity) spans threonine 196 to serine 216. Positions aspartate 256–valine 271 are enriched in polar residues. A compositionally biased stretch (low complexity) spans aspartate 279–asparagine 295. Residues asparagine 307 to leucine 353 enclose the F-box 1 domain. Residues asparagine 385–asparagine 416 are disordered. The 48-residue stretch at valine 679–leucine 726 folds into the F-box 2 domain. Disordered stretches follow at residues glutamine 762–asparagine 815 and glycine 827–asparagine 1101. The segment covering glycine 827–glycine 848 has biased composition (low complexity). Residues serine 849–serine 866 show a composition bias toward gly residues. Low complexity-rich tracts occupy residues asparagine 867 to serine 880 and phenylalanine 888 to threonine 910. A compositionally biased stretch (polar residues) spans asparagine 911 to valine 935. Low complexity-rich tracts occupy residues serine 943 to serine 957 and proline 972 to isoleucine 1053. A compositionally biased stretch (polar residues) spans valine 1059–alanine 1076. Low complexity predominate over residues asparagine 1077–asparagine 1101. Positions methionine 1116–serine 1244 constitute an N-terminal Ras-GEF domain. Residues isoleucine 1254–glycine 1279 form a disordered region. Residues lysine 1264–glycine 1279 are compositionally biased toward gly residues. The Ras-GEF domain occupies proline 1317–arginine 1548.

Functionally, promotes the exchange of Ras-bound GDP by GTP. This Dictyostelium discoideum (Social amoeba) protein is Ras guanine nucleotide exchange factor G (gefG).